The chain runs to 512 residues: Multidrug resistance protein 3 (512 aa).

The next 14 helical transmembrane spans lie at 13 to 33 (FVVLGLLLGILMSAMDNTIVA), 48 to 68 (KFAWVTASYMVAVMAGMPIYG), 79 to 99 (FFLFGLIFFLIGSALCGIAQT), 109 to 129 (IQGIGGGALLPIAFTIIFDLF), 139 to 159 (GMFGAVFGLSSVLGPLLGAII), 163 to 183 (ISWHWVFYINVPIGALSLFFI), 200 to 220 (WGGAITLVVSIVCLMFALELG), 228 to 248 (SIQIIGLFIVFAVFFIAFFIV), 272 to 292 (ILAFLYGGTFIILAVFIPIFV), 304 to 324 (GFILTPMMIGSVIGSMIGGIF), 333 to 353 (LMLISVIAFFIGMLLLSNMTP), 358 to 378 (VWLTVFMMISGFGVGFNFSLL), 399 to 421 (SFLRSFGMTLGVTIFGTVQTNVF), and 475 to 495 (ITYVFLLALIPIVLAAVTILF).

Belongs to the major facilitator superfamily. EmrB family.

It is found in the cell membrane. Its function is as follows. Confers resistance to puromycin, tosufloxacin and norfloxacin. In Bacillus subtilis (strain 168), this protein is Multidrug resistance protein 3 (bmr3).